The primary structure comprises 524 residues: Cytochrome P450 monooxygenase drtD (524 aa).

Residues 2 to 22 (SDTYLVAASGLAVCFFVLYLL) traverse the membrane as a helical segment. Cysteine 418 is a heme binding site.

Belongs to the cytochrome P450 family. It depends on heme as a cofactor.

Its subcellular location is the membrane. The protein operates within secondary metabolite biosynthesis; terpenoid biosynthesis. Functionally, cytochrome P450 monooxygenase; part of the gene cluster that mediates the biosynthesis of various drimane-type sesquiterpene esters, compounds that exhibit diverse biological activities and are widely present in eukaryotes. The pathway begins with the synthesis of the backbone drimenol by the terpene cyclase drtB using farnesyl pyrophosphate (FPP) as substrate. The cytochrome P450 monooxygenase drtD is then responsible for the hydroxylations at C-6, C-9 and C-12, as well as the oxidation of hydroxyl groups at C-6 and C-11 to a ketone and an aldehyde, respectively. Then, the biosynthesis can go in two directions, either the hydroxylated drimenol is further hydroxylated at C-2 and C-3 by an enzyme(s) not associated with the drt cluster, or the FAD-binding oxidoreductase drtC further oxidizes C-11 or C-12 to form the butyrolactone ring. DrtB, drtD and drtC are solely responsible for the formation of the different drimane structures observed during drimane sesquiterpenes biosynthesis. The polyketide synthase drtA synthesizes different lengths (C6 and C8) of PKS chains, which are then oxidized to varying degrees by the short-chain dehydrogenase drtF. Finally, these PKS chains are transferred onto drimane sesquiterpenes by the acyltransferase drtE, forming the sesquiterpene esters. In addition to the different fatty acyl-CoA chains produced by drtA, drtE is also able to use cinnamoyl-CoA as a substrate. This chain is Cytochrome P450 monooxygenase drtD, found in Aspergillus calidoustus.